Here is a 451-residue protein sequence, read N- to C-terminus: UDP-N-acetylmuramate--L-alanine ligase (451 aa).

Residue 110-116 coordinates ATP; that stretch reads GTHGKTT.

Belongs to the MurCDEF family.

The protein localises to the cytoplasm. The catalysed reaction is UDP-N-acetyl-alpha-D-muramate + L-alanine + ATP = UDP-N-acetyl-alpha-D-muramoyl-L-alanine + ADP + phosphate + H(+). It participates in cell wall biogenesis; peptidoglycan biosynthesis. Functionally, cell wall formation. The protein is UDP-N-acetylmuramate--L-alanine ligase of Francisella tularensis subsp. novicida (strain U112).